A 156-amino-acid chain; its full sequence is Small ribosomal subunit protein uS7 (156 aa).

This sequence belongs to the universal ribosomal protein uS7 family. Part of the 30S ribosomal subunit. Contacts proteins S9 and S11.

Its function is as follows. One of the primary rRNA binding proteins, it binds directly to 16S rRNA where it nucleates assembly of the head domain of the 30S subunit. Is located at the subunit interface close to the decoding center, probably blocks exit of the E-site tRNA. This Paraburkholderia phymatum (strain DSM 17167 / CIP 108236 / LMG 21445 / STM815) (Burkholderia phymatum) protein is Small ribosomal subunit protein uS7.